The chain runs to 296 residues: Ribosomal RNA small subunit methyltransferase H (296 aa).

S-adenosyl-L-methionine-binding positions include 38 to 40 (GVH), E57, F80, D103, and H110.

The protein belongs to the methyltransferase superfamily. RsmH family.

The protein localises to the cytoplasm. It catalyses the reaction cytidine(1402) in 16S rRNA + S-adenosyl-L-methionine = N(4)-methylcytidine(1402) in 16S rRNA + S-adenosyl-L-homocysteine + H(+). In terms of biological role, specifically methylates the N4 position of cytidine in position 1402 (C1402) of 16S rRNA. This chain is Ribosomal RNA small subunit methyltransferase H, found in Borreliella burgdorferi (strain ATCC 35210 / DSM 4680 / CIP 102532 / B31) (Borrelia burgdorferi).